A 448-amino-acid polypeptide reads, in one-letter code: Protein arginine N-methyltransferase 2 (448 aa).

Interaction with ESR1 stretches follow at residues 1–289 and 145–287; these read MEAP…SALK and KESL…NLSA. Residues 42–101 enclose the SH3 domain; the sequence is LQPEEFVAIADYTATDETQLSFLRGEKILILRQTTADWWWGERAGCCGYIPANHLGKQLE. An asymmetric dimethylarginine mark is found at Arg73 and Arg84. Residues 95 to 219 form an interaction with RB1 region; it reads HLGKQLEEYD…DVVLPEKVDV (125 aa). Residues 111–414 enclose the SAM-dependent MTase PRMT-type domain; sequence DEEYFDSYGT…CCVTKKSGME (304 aa). The S-adenosyl-L-methionine site is built by His124, Arg133, Gly157, Glu180, and Glu209. Active-site residues include Glu223 and Glu232.

This sequence belongs to the class I-like SAM-binding methyltransferase superfamily. Protein arginine N-methyltransferase family. As to quaternary structure, self-associates. Interacts with HNRNPUL1. Interacts with NFKBIA. Interacts with NCOA6 coactivator. Interacts (via SH3 domain) with PRMT8. Interacts with AR. Interacts with ESR1, ESR2, PGR, PPARG, RARA, RXRA and THRB. Interacts with RB1 and E2F1. As to expression, expressed in liver, pancreas, lung, brain, skeletal muscle, heart, muscle and fat.

It localises to the cytoplasm. The protein resides in the nucleus. The enzyme catalyses L-arginyl-[protein] + 2 S-adenosyl-L-methionine = N(omega),N(omega)-dimethyl-L-arginyl-[protein] + 2 S-adenosyl-L-homocysteine + 2 H(+). Functionally, arginine methyltransferase that methylates the guanidino nitrogens of arginyl residues in proteins such as STAT3, FBL, histone H4. May inhibit NF-kappa-B transcription, and promote apoptosis. Represses E2F1 transcriptional activity (in a RB1-dependent manner). Has a negative regulation effect on G1 to S transition of mitotic cell cycle. Involved in growth regulation. Acts as a coactivator (with NCOA2) of the androgen receptor (AR)-mediated transactivation. Acts as a coactivator (with estrogen) of estrogen receptor (ER)-mediated transactivation. Enhances PGR, PPARG, RARA-mediated transactivation. The protein is Protein arginine N-methyltransferase 2 (Prmt2) of Mus musculus (Mouse).